A 173-amino-acid chain; its full sequence is Zinc resistance-associated protein homolog (173 aa).

Positions 1 to 28 (MNSKRIALGIIALATVVSLGTAANNAFA) are cleaved as a signal peptide.

The protein belongs to the ZraP family.

The chain is Zinc resistance-associated protein homolog from Nitratidesulfovibrio vulgaris (strain ATCC 29579 / DSM 644 / CCUG 34227 / NCIMB 8303 / VKM B-1760 / Hildenborough) (Desulfovibrio vulgaris).